The sequence spans 23 residues: NADP-dependent malic enzyme (23 aa).

The protein belongs to the malic enzymes family. In terms of assembly, homotetramer.

The catalysed reaction is (S)-malate + NADP(+) = pyruvate + CO2 + NADPH. The enzyme catalyses oxaloacetate + H(+) = pyruvate + CO2. The protein is NADP-dependent malic enzyme of Populus euphratica (Euphrates poplar).